A 506-amino-acid polypeptide reads, in one-letter code: Maturase K (506 aa).

This sequence belongs to the intron maturase 2 family. MatK subfamily.

It localises to the plastid. Its subcellular location is the chloroplast. Usually encoded in the trnK tRNA gene intron. Probably assists in splicing its own and other chloroplast group II introns. The polypeptide is Maturase K (Styphnolobium japonicum (Japanese pagoda tree)).